The chain runs to 633 residues: Proline-rich protein LAS17 (633 aa).

In terms of domain architecture, WH1 spans 16–127; that stretch reads LPKASNKIID…KRVQKRERYA (112 aa). 2 disordered regions span residues 145–545 and 563–606; these read REEQ…TTGD and ALRK…PASL. Low complexity predominate over residues 192–215; sequence AETFDSDQTSSFSDINSTTASAPT. Composition is skewed to pro residues over residues 216–225 and 238–256; these read TPAPALPPAS and SLPPLPNQFAPLPDPPQHN. 2 stretches are compositionally biased toward low complexity: residues 257-269 and 307-322; these read SPPQNNAPSQPQS and PQQNRPLPQLPNRNNR. A Phosphothreonine modification is found at threonine 334. Serine 337 carries the post-translational modification Phosphoserine. Over residues 342–357 the composition is skewed to pro residues; that stretch reads PAPPPPPRRGPAPPPP. 3 stretches are compositionally biased toward polar residues: residues 363–376, 399–414, and 454–465; these read TSNTLNSAGGNSLL, NVTMQQNPQQYNNSNR, and PQNTQAPSQATN. Residues 479-488 show a composition bias toward low complexity; the sequence is QSQIPQSAPS. Residues 547-567 form the WH2 domain; it reads GRDALLASIRGAGGIGALRKV. Serine 588 is subject to Phosphoserine.

In terms of assembly, interacts with KRE6, LSB3, LSB5 and YSC84.

The sequence is that of Proline-rich protein LAS17 (LAS17) from Saccharomyces cerevisiae (strain ATCC 204508 / S288c) (Baker's yeast).